A 529-amino-acid chain; its full sequence is GTPase Obg (529 aa).

Residues alanine 2–isoleucine 159 form the Obg domain. Positions alanine 160–lysine 343 constitute an OBG-type G domain. GTP-binding positions include glycine 166–serine 173, phenylalanine 191–isoleucine 195, aspartate 212–glycine 215, asparagine 295–aspartate 298, and serine 324–threonine 326. The Mg(2+) site is built by serine 173 and threonine 193. The region spanning proline 363–proline 447 is the OCT domain. The tract at residues glycine 461–serine 529 is disordered. Over residues threonine 462 to alanine 502 the composition is skewed to basic and acidic residues.

This sequence belongs to the TRAFAC class OBG-HflX-like GTPase superfamily. OBG GTPase family. In terms of assembly, monomer. Mg(2+) serves as cofactor.

The protein localises to the cytoplasm. In terms of biological role, an essential GTPase which binds GTP, GDP and possibly (p)ppGpp with moderate affinity, with high nucleotide exchange rates and a fairly low GTP hydrolysis rate. Plays a role in control of the cell cycle, stress response, ribosome biogenesis and in those bacteria that undergo differentiation, in morphogenesis control. This chain is GTPase Obg, found in Pseudarthrobacter chlorophenolicus (strain ATCC 700700 / DSM 12829 / CIP 107037 / JCM 12360 / KCTC 9906 / NCIMB 13794 / A6) (Arthrobacter chlorophenolicus).